We begin with the raw amino-acid sequence, 293 residues long: Pseudouridine-5'-phosphate glycosidase (293 aa).

Catalysis depends on glutamate 21, which acts as the Proton donor. 2 residues coordinate substrate: lysine 81 and valine 101. Aspartate 130 lines the Mn(2+) pocket. 132-134 contributes to the substrate binding site; it reads SQD. Lysine 151 acts as the Nucleophile in catalysis.

This sequence belongs to the pseudouridine-5'-phosphate glycosidase family. In terms of assembly, homotrimer. Mn(2+) serves as cofactor.

The enzyme catalyses D-ribose 5-phosphate + uracil = psi-UMP + H2O. Its function is as follows. Catalyzes the reversible cleavage of pseudouridine 5'-phosphate (PsiMP) to ribose 5-phosphate and uracil. Functions biologically in the cleavage direction, as part of a pseudouridine degradation pathway. The sequence is that of Pseudouridine-5'-phosphate glycosidase from Thermosipho africanus (strain TCF52B).